A 306-amino-acid chain; its full sequence is Acetyl-coenzyme A carboxylase carboxyl transferase subunit beta (306 aa).

Residues valine 25–arginine 294 form the CoA carboxyltransferase N-terminal domain. Zn(2+) contacts are provided by cysteine 29, cysteine 32, cysteine 48, and cysteine 51. Residues cysteine 29–cysteine 51 form a C4-type zinc finger. Residues asparagine 281–valine 306 are disordered. The segment covering leucine 289 to valine 306 has biased composition (basic and acidic residues).

Belongs to the AccD/PCCB family. As to quaternary structure, acetyl-CoA carboxylase is a heterohexamer composed of biotin carboxyl carrier protein (AccB), biotin carboxylase (AccC) and two subunits each of ACCase subunit alpha (AccA) and ACCase subunit beta (AccD). It depends on Zn(2+) as a cofactor.

The protein resides in the cytoplasm. The enzyme catalyses N(6)-carboxybiotinyl-L-lysyl-[protein] + acetyl-CoA = N(6)-biotinyl-L-lysyl-[protein] + malonyl-CoA. The protein operates within lipid metabolism; malonyl-CoA biosynthesis; malonyl-CoA from acetyl-CoA: step 1/1. Functionally, component of the acetyl coenzyme A carboxylase (ACC) complex. Biotin carboxylase (BC) catalyzes the carboxylation of biotin on its carrier protein (BCCP) and then the CO(2) group is transferred by the transcarboxylase to acetyl-CoA to form malonyl-CoA. This Sodalis glossinidius (strain morsitans) protein is Acetyl-coenzyme A carboxylase carboxyl transferase subunit beta.